The primary structure comprises 395 residues: MSGLLVMPRILRCLNVSRISAILLRSCFLYGTFFGVITFRIERKDSQLVAINRRGYLWICLVIRLLASCFYGYSYDAWSGQYEDMYLRAFFGFRLIGCLICSVIILVMQFWFGEELINLVNRFLQLFRRMQSLTNSPKNRFGDRAEFLLMFSKVFSLLFVFMAFRLMLSPWFLLTLVCDLYTSVGTGMITHLCFVGYLSIGVLYRDLNNYVDCQLRAQLRSLNGENNSFRNNPQPTRQAISNLDKCLYLYDEIHQVSRSFQQLFDLPLFLSLAQSLLAMSMVSYHAILRRQYSFNLWGLVIKLLIDVVLLTMSVHSAVNGSRLIRRLSFENFYVTDSQSYHQKLELFLGRLQHQELRVFPLGLFEVSNELTLFFLSAMVTYLVFLVQYGMQSQQI.

Residues 1–18 are Cytoplasmic-facing; the sequence is MSGLLVMPRILRCLNVSR. The helical transmembrane segment at 19-39 threads the bilayer; it reads ISAILLRSCFLYGTFFGVITF. Residues 40–89 are Extracellular-facing; it reads RIERKDSQLVAINRRGYLWICLVIRLLASCFYGYSYDAWSGQYEDMYLRA. A helical transmembrane segment spans residues 90–110; it reads FFGFRLIGCLICSVIILVMQF. Over 111 to 153 the chain is Cytoplasmic; it reads WFGEELINLVNRFLQLFRRMQSLTNSPKNRFGDRAEFLLMFSK. Residues 154-174 traverse the membrane as a helical segment; sequence VFSLLFVFMAFRLMLSPWFLL. At 175 to 183 the chain is on the extracellular side; it reads TLVCDLYTS. Residues 184–204 form a helical membrane-spanning segment; sequence VGTGMITHLCFVGYLSIGVLY. Residues 205 to 267 lie on the Cytoplasmic side of the membrane; sequence RDLNNYVDCQ…RSFQQLFDLP (63 aa). The helical transmembrane segment at 268 to 288 threads the bilayer; that stretch reads LFLSLAQSLLAMSMVSYHAIL. Topologically, residues 289-293 are extracellular; that stretch reads RRQYS. A helical transmembrane segment spans residues 294-314; sequence FNLWGLVIKLLIDVVLLTMSV. Topologically, residues 315–369 are cytoplasmic; it reads HSAVNGSRLIRRLSFENFYVTDSQSYHQKLELFLGRLQHQELRVFPLGLFEVSNE. Residues 370-390 traverse the membrane as a helical segment; that stretch reads LTLFFLSAMVTYLVFLVQYGM. Over 391–395 the chain is Extracellular; the sequence is QSQQI.

It belongs to the insect chemoreceptor superfamily. Gustatory receptor (GR) family. Gr93a subfamily. In larvae, is expressed in neurons of the terminal external chemosensory organ and of the dorsal pharyngeal sense organ.

The protein resides in the cell membrane. Its function is as follows. Probable gustatory receptor which mediates acceptance or avoidance behavior, depending on its substrates. The sequence is that of Putative gustatory receptor 93b (Gr93b) from Drosophila melanogaster (Fruit fly).